Here is a 697-residue protein sequence, read N- to C-terminus: Semaphorin-2A (697 aa).

The first 20 residues, 1–20, serve as a signal peptide directing secretion; sequence MAAKLWNLLLVAASVHLVGS. Positions 21 to 493 constitute a Sema domain; the sequence is VEQLHQDLIH…SDNIVRQIEL (473 aa). Residues N63 and N66 are each glycosylated (N-linked (GlcNAc...) asparagine). Residues C87 and C98 are joined by a disulfide bond. N-linked (GlcNAc...) asparagine glycosylation is found at N132, N198, and N283. 2 cysteine pairs are disulfide-bonded: C260/C367 and C284/C326. N369 is a glycosylation site (N-linked (GlcNAc...) asparagine). Disulfide bonds link C496–C512 and C506–C521. An Ig-like C2-type domain is found at 526–634; the sequence is PGLLQDVTNT…LCSYNITVDA (109 aa). N534, N629, and N679 each carry an N-linked (GlcNAc...) asparagine glycan. A disulfide bridge links C618 with C654. A compositionally biased stretch (polar residues) spans 673–685; sequence QCSTKQNNSNQKT. The segment at 673–697 is disordered; the sequence is QCSTKQNNSNQKTHPNDIFHSNPVA.

The protein belongs to the semaphorin family. Expressed in a gradient in the developing limb bud epithelium during Ti pioneer axon outgrowth.

It is found in the secreted. Its function is as follows. Acts as a chemorepulsive guidance molecule critical for axon fasciculation and for determining both the initial direction and subsequent pathfinding events of the Ti axon projection. This chain is Semaphorin-2A (SEMA-2A), found in Schistocerca gregaria (Desert locust).